The chain runs to 260 residues: Cell wall synthesis protein Wag31 (260 aa).

The stretch at 31–64 (FLDLVENELTRLIEENSDLRQRINELDQELAAGG) forms a coiled coil. A Phosphothreonine modification is found at T73. Residues 161–196 (MLADAQSRSEAQLRQAQEKADALQADAERKHSEIMG) are a coiled coil. The disordered stretch occupies residues 233–260 (ELGQRGSAAPVDSNADAGGFDQFNRGKN).

The protein belongs to the DivIVA family. As to quaternary structure, forms homooligomers. Phosphorylated by PknA. Phosphorylation enhances polar localization, which in turn heightens polar peptidoglycan biosynthesis.

The protein localises to the cytoplasm. In terms of biological role, important for maintaining cell shape and cell wall integrity by localizing peptidoglycan synthesis to the cell poles. The polypeptide is Cell wall synthesis protein Wag31 (wag31) (Mycobacterium tuberculosis (strain CDC 1551 / Oshkosh)).